The sequence spans 506 residues: UDP-N-acetylmuramoylalanine--D-glutamate ligase (506 aa).

128-134 (GTNGKTT) contributes to the ATP binding site.

It belongs to the MurCDEF family.

The protein localises to the cytoplasm. It catalyses the reaction UDP-N-acetyl-alpha-D-muramoyl-L-alanine + D-glutamate + ATP = UDP-N-acetyl-alpha-D-muramoyl-L-alanyl-D-glutamate + ADP + phosphate + H(+). It functions in the pathway cell wall biogenesis; peptidoglycan biosynthesis. Functionally, cell wall formation. Catalyzes the addition of glutamate to the nucleotide precursor UDP-N-acetylmuramoyl-L-alanine (UMA). The sequence is that of UDP-N-acetylmuramoylalanine--D-glutamate ligase from Albidiferax ferrireducens (strain ATCC BAA-621 / DSM 15236 / T118) (Rhodoferax ferrireducens).